We begin with the raw amino-acid sequence, 655 residues long: DNA mismatch repair protein MutL (655 aa).

Disordered regions lie at residues 357 to 416 and 439 to 460; these read EKKQ…DDYT and DFDSDISNHSDSDIKGSVSKDP. Positions 371–383 are enriched in basic and acidic residues; it reads SHEEDEKNDDKAY. The span at 402–416 shows a compositional bias: polar residues; the sequence is NTSVSTSPNSDDDYT.

Belongs to the DNA mismatch repair MutL/HexB family.

Its function is as follows. This protein is involved in the repair of mismatches in DNA. It is required for dam-dependent methyl-directed DNA mismatch repair. May act as a 'molecular matchmaker', a protein that promotes the formation of a stable complex between two or more DNA-binding proteins in an ATP-dependent manner without itself being part of a final effector complex. This is DNA mismatch repair protein MutL from Staphylococcus saprophyticus subsp. saprophyticus (strain ATCC 15305 / DSM 20229 / NCIMB 8711 / NCTC 7292 / S-41).